The sequence spans 198 residues: Protein hunchback (198 aa).

2 disordered regions span residues 16 to 117 (SHHH…PMQS) and 152 to 198 (NDKL…KYMA). The segment covering 17–31 (HHHHHHHAHHSHHQH) has biased composition (basic residues). 2 stretches are compositionally biased toward low complexity: residues 35–46 (SNSNSNASSPHQ) and 68–83 (QQQQQQQQQQQQQQQQ). Polar residues predominate over residues 95–105 (PSPSNNDQNSP). The span at 179 to 198 (EPEKEHDLMSNSSEDMKYMA) shows a compositional bias: basic and acidic residues.

Belongs to the hunchback C2H2-type zinc-finger protein family.

Its subcellular location is the nucleus. Its function is as follows. Gap class segmentation protein that controls development of head structures. The sequence is that of Protein hunchback (hb) from Drosophila disjuncta (Fruit fly).